A 704-amino-acid polypeptide reads, in one-letter code: Glycogen [starch] synthase, liver (704 aa).

Ser-8 is modified (phosphoserine; by AMPK and PKA). Phosphoserine is present on Ser-11. Lys-40 serves as a coordination point for UDP. Positions 205 and 211 each coordinate UDP-alpha-D-glucose. His-291, Glu-292, Gln-294, His-297, and Lys-301 together coordinate alpha-D-glucose 6-phosphate. Arg-331 serves as a coordination point for UDP. Arg-331 is a UDP-alpha-D-glucose binding site. His-501 provides a ligand contact to alpha-D-glucose 6-phosphate. UDP-alpha-D-glucose contacts are provided by Glu-510, Trp-512, and Gly-513. Residue Thr-515 participates in UDP binding. The alpha-D-glucose 6-phosphate site is built by Arg-582 and Arg-586. Positions 620-704 are disordered; that stretch reads KFHLEPTSPP…KKKLHGEYKN (85 aa). Phosphoserine is present on Ser-627. A phosphoserine; by GSK3-alpha and GSK3-beta mark is found at Ser-641, Ser-645, Ser-649, and Ser-653. Positions 647-657 are enriched in low complexity; that stretch reads SGSQASSPQCS. Ser-657 bears the Phosphoserine; by CK2 mark. The span at 658–675 shows a compositional bias: acidic residues; sequence DAEDEEDEDERYDEEEEA. Ser-684 carries the phosphoserine modification.

This sequence belongs to the glycosyltransferase 3 family. In terms of assembly, part of the glycogen synthase (GS)-glycogenin complex, a heterooctamer composed of a tetramer of GS and 2 dimers of glycogenin, where each GS protomer binds to one glycogenin subunit (via glycogenin C-terminus); the GS tetramer may dissociate from glycogenin dimers to continue glycogen polymerization on its own. May also form a heterooctamer complex with GYG1 (via GYG1 C-terminus). Phosphorylation reduces the activity towards UDP-alpha-D-glucose. Primed phosphorylation at Ser-657 (site 5) by CSNK2A1 and CSNK2A2 is required for inhibitory phosphorylation at Ser-641 (site 3a), Ser-645 (site 3b), Ser-649 (site 3c) and Ser-653 (site 4) by GSK3A an GSK3B. Dephosphorylation at Ser-641 and Ser-645 by PP1 activates the enzyme. Phosphorylation at Ser-8 is not required for interaction with GYG1. Interaction with GYG1 does not regulate the phosphorylation at Ser-8 and Ser-641. Specifically expressed in liver.

The enzyme catalyses [(1-&gt;4)-alpha-D-glucosyl](n) + UDP-alpha-D-glucose = [(1-&gt;4)-alpha-D-glucosyl](n+1) + UDP + H(+). Its pathway is glycan biosynthesis; glycogen biosynthesis. With respect to regulation, allosteric activation by glucose-6-phosphate. Phosphorylation reduces the activity towards UDP-glucose. When in the non-phosphorylated state, glycogen synthase does not require glucose-6-phosphate as an allosteric activator; when phosphorylated it does. Its function is as follows. Glycogen synthase participates in the glycogen biosynthetic process along with glycogenin and glycogen branching enzyme. Extends the primer composed of a few glucose units formed by glycogenin by adding new glucose units to it. In this context, glycogen synthase transfers the glycosyl residue from UDP-Glc to the non-reducing end of alpha-1,4-glucan. This chain is Glycogen [starch] synthase, liver, found in Mus musculus (Mouse).